The following is a 40-amino-acid chain: Metallothionein-1 (40 aa).

This sequence belongs to the metallothionein superfamily. Type 5 family.

Functionally, this protein binds cations of several transition elements. It is thought to be involved in detoxification processes. This Drosophila ananassae (Fruit fly) protein is Metallothionein-1 (MtnA).